The chain runs to 374 residues: Fe(2+) transport protein 1 (374 aa).

The N-terminal stretch at 1–33 is a signal peptide; sequence MATPRTLVPILPPVAALLLLLVAASSIPILAAA. At 34–62 the chain is on the extracellular side; sequence QPADACGGAPDQAAADGACHDVPRALRLK. The chain crosses the membrane as a helical span at residues 63–83; that stretch reads LIAIPTILVSSVVGVCLPLLS. Topologically, residues 84–92 are cytoplasmic; sequence RSVPALRPD. A helical transmembrane segment spans residues 93 to 113; the sequence is GGLFAVVKAFASGVILATGYM. The Extracellular segment spans residues 114–137; that stretch reads HVLPDAFNNLTSPCLPRKPWSEFP. A helical transmembrane segment spans residues 138 to 158; sequence FAAFVAMLAAVSTLMADSLML. The Cytoplasmic portion of the chain corresponds to 159 to 219; the sequence is TYYNRSKPRP…ATQVQLRRNR (61 aa). Residues 166–199 are disordered; that stretch reads PRPSSGGDVAAVADHGESPDQGHRHGHGHGHGHG. Basic and acidic residues predominate over residues 179-188; it reads DHGESPDQGH. Residues 220-240 form a helical membrane-spanning segment; that stretch reads VVVQVLEIGIVVHSVVIGLGM. At 241–251 the chain is on the extracellular side; the sequence is GASQNVCTIRP. The helical transmembrane segment at 252-272 threads the bilayer; that stretch reads LVAAMCFHQMFEGMGLGGCIL. Topologically, residues 273 to 282 are cytoplasmic; it reads QAEYGRRMRS. The helical transmembrane segment at 283-303 threads the bilayer; it reads VLVFFFSTTTPFGIALGLALT. Residues 304 to 313 lie on the Extracellular side of the membrane; it reads RVYRDNSPTA. Residues 314–334 form a helical membrane-spanning segment; it reads LIVVGLLNAASAGLLHYMALV. At 335–353 the chain is on the cytoplasmic side; sequence ELLAADFMGPKLQGNVRLQ. Residues 354–374 traverse the membrane as a helical segment; it reads LAAFLAVLLGAGGMSVMAKWA.

The protein belongs to the ZIP transporter (TC 2.A.5) family. In terms of tissue distribution, expressed in companion cells in the upper region of the root.

The protein localises to the cell membrane. Its function is as follows. Iron transporter involved in the uptake of iron from the rhizosphere across the plasma membrane in the root epidermal layer. May also transport other divalent cations. The chain is Fe(2+) transport protein 1 (IRT1) from Oryza sativa subsp. japonica (Rice).